Consider the following 295-residue polypeptide: Putative fused nickel transport protein NikMN (295 aa).

The next 8 membrane-spanning stretches (helical) occupy residues 8–28 (LDLS…GYSI), 39–59 (LFGI…PIPG), 70–90 (LAGI…VLTI), 98–118 (GGIT…VFVG), 135–155 (FIAG…EIGI), 175–195 (ALLG…IAAA), 211–231 (LAVI…AELV), and 268–288 (AGTL…GFAL).

This sequence belongs to the CbiM family. NikM subfamily.

The protein localises to the cell membrane. Its function is as follows. May be involved in nickel transport. The protein is Putative fused nickel transport protein NikMN of Archaeoglobus fulgidus (strain ATCC 49558 / DSM 4304 / JCM 9628 / NBRC 100126 / VC-16).